The sequence spans 384 residues: uncharacterized protein (384 aa).

This is an uncharacterized protein from Nostoc sp. (strain PCC 7120 / SAG 25.82 / UTEX 2576).